A 144-amino-acid polypeptide reads, in one-letter code: Mating factor alpha (144 aa).

Residues 1–19 constitute a signal peptide (or 20); it reads MRFPSIFTAVLFAASSALA.

Functionally, the active factor is excreted into the culture medium by haploid cells of the alpha mating type and acts on cells of the opposite mating type (type A). It mediates the conjugation process between the two types by inhibiting the initiation of DNA synthesis in type a cells and synchronizing them with type alpha. This is Mating factor alpha from Saccharomyces uvarum (Yeast).